Reading from the N-terminus, the 187-residue chain is Elongation factor P (187 aa).

It belongs to the elongation factor P family.

The protein localises to the cytoplasm. The protein operates within protein biosynthesis; polypeptide chain elongation. Involved in peptide bond synthesis. Stimulates efficient translation and peptide-bond synthesis on native or reconstituted 70S ribosomes in vitro. Probably functions indirectly by altering the affinity of the ribosome for aminoacyl-tRNA, thus increasing their reactivity as acceptors for peptidyl transferase. The sequence is that of Elongation factor P from Corynebacterium glutamicum (strain R).